The sequence spans 407 residues: Putative polysaccharide ligase RF_0568 (407 aa).

The next 10 membrane-spanning stretches (helical) occupy residues 15 to 35 (LGMV…LMLF), 71 to 91 (MTIK…LFAI), 100 to 120 (FIQV…VPFG), 129 to 149 (LILG…SHGF), 166 to 186 (GCAL…SSGK), 203 to 223 (ISDS…FILA), 229 to 249 (IFFK…PVIA), 272 to 292 (LFIW…GYGF), 324 to 344 (ILQI…CLVY), and 379 to 399 (IWQI…KLLV).

This sequence belongs to the O-antigen ligase family.

Its subcellular location is the membrane. The polypeptide is Putative polysaccharide ligase RF_0568 (Rickettsia felis (strain ATCC VR-1525 / URRWXCal2) (Rickettsia azadi)).